Consider the following 99-residue polypeptide: Large ribosomal subunit protein uL23 (99 aa).

It belongs to the universal ribosomal protein uL23 family. In terms of assembly, part of the 50S ribosomal subunit. Contacts protein L29, and trigger factor when it is bound to the ribosome.

Its function is as follows. One of the early assembly proteins it binds 23S rRNA. One of the proteins that surrounds the polypeptide exit tunnel on the outside of the ribosome. Forms the main docking site for trigger factor binding to the ribosome. In Clavibacter michiganensis subsp. michiganensis (strain NCPPB 382), this protein is Large ribosomal subunit protein uL23.